The chain runs to 397 residues: Purine nucleoside transport protein NupG (397 aa).

The next 11 helical transmembrane spans lie at 1 to 21, 32 to 52, 62 to 82, 97 to 117, 133 to 153, 165 to 185, 187 to 207, 242 to 262, 282 to 302, 335 to 355, and 377 to 397; these read MYFLLNLVGLIVIMAVVFLCS, IITLIVLELLITWFMLGTKVG, FFTWLIACASDGIAFAFPSVM, IIFIVTFFDILTYFGILPWLI, LESFFSIQMMFLGNTEALAVI, LLTFGLMSMSSISGSIIGSYL, MVPATYVFTAIPLNCLNALII, MLVGMNMVIVILAMVIGYVAL, IFAYLFSPFAFLLGLPVHDAM, VAVATTFLTSFANFSTVGMIY, and LLVSGIAVSLLSAAIVGLFVW.

It belongs to the concentrative nucleoside transporter (CNT) (TC 2.A.41) family.

It is found in the cell membrane. Involved in the uptake of the purine ribonucleosides inosine and guanosine. This chain is Purine nucleoside transport protein NupG (nupG), found in Bacillus subtilis (strain 168).